Consider the following 401-residue polypeptide: 1-deoxy-D-xylulose 5-phosphate reductoisomerase (401 aa).

The NADPH site is built by T11, G12, S13, I14, R38, N39, and N125. K126 lines the 1-deoxy-D-xylulose 5-phosphate pocket. NADPH is bound at residue E127. D151 serves as a coordination point for Mn(2+). 1-deoxy-D-xylulose 5-phosphate is bound by residues S152, E153, S179, and H202. Position 153 (E153) interacts with Mn(2+). G208 serves as a coordination point for NADPH. 1-deoxy-D-xylulose 5-phosphate contacts are provided by S215, N220, K221, and E224. E224 serves as a coordination point for Mn(2+).

The protein belongs to the DXR family. Requires Mg(2+) as cofactor. The cofactor is Mn(2+).

It catalyses the reaction 2-C-methyl-D-erythritol 4-phosphate + NADP(+) = 1-deoxy-D-xylulose 5-phosphate + NADPH + H(+). The protein operates within isoprenoid biosynthesis; isopentenyl diphosphate biosynthesis via DXP pathway; isopentenyl diphosphate from 1-deoxy-D-xylulose 5-phosphate: step 1/6. In terms of biological role, catalyzes the NADPH-dependent rearrangement and reduction of 1-deoxy-D-xylulose-5-phosphate (DXP) to 2-C-methyl-D-erythritol 4-phosphate (MEP). The polypeptide is 1-deoxy-D-xylulose 5-phosphate reductoisomerase (Paraburkholderia phytofirmans (strain DSM 17436 / LMG 22146 / PsJN) (Burkholderia phytofirmans)).